A 178-amino-acid chain; its full sequence is Inorganic pyrophosphatase (178 aa).

Substrate is bound by residues Lys29, Arg43, and Tyr55. Asp65, Asp70, and Asp102 together coordinate Mg(2+). Tyr141 serves as a coordination point for substrate.

This sequence belongs to the PPase family. In terms of assembly, homohexamer. Requires Mg(2+) as cofactor.

Its subcellular location is the cytoplasm. The catalysed reaction is diphosphate + H2O = 2 phosphate + H(+). Its function is as follows. Catalyzes the hydrolysis of inorganic pyrophosphate (PPi) forming two phosphate ions. The sequence is that of Inorganic pyrophosphatase from Rickettsia typhi (strain ATCC VR-144 / Wilmington).